The sequence spans 144 residues: Transcriptional regulator MraZ (144 aa).

SpoVT-AbrB domains lie at 5 to 47 (EYDH…TLDE) and 76 to 119 (AVEV…DRET).

It belongs to the MraZ family. As to quaternary structure, forms oligomers.

It localises to the cytoplasm. Its subcellular location is the nucleoid. The polypeptide is Transcriptional regulator MraZ (Staphylococcus aureus).